A 377-amino-acid polypeptide reads, in one-letter code: F-box protein At4g00755 (377 aa).

The F-box domain maps to 7–47 (LDTDTSLSILSCLDDPSDIVRASAVSRSWRQFVVKYSLSKN).

This Arabidopsis thaliana (Mouse-ear cress) protein is F-box protein At4g00755.